We begin with the raw amino-acid sequence, 148 residues long: Large ribosomal subunit protein bL9 (148 aa).

The protein belongs to the bacterial ribosomal protein bL9 family.

In terms of biological role, binds to the 23S rRNA. In Acidithiobacillus ferrooxidans (strain ATCC 23270 / DSM 14882 / CIP 104768 / NCIMB 8455) (Ferrobacillus ferrooxidans (strain ATCC 23270)), this protein is Large ribosomal subunit protein bL9.